A 427-amino-acid polypeptide reads, in one-letter code: Imidazolonepropionase (427 aa).

His96 and His98 together coordinate Fe(3+). 2 residues coordinate Zn(2+): His96 and His98. The 4-imidazolone-5-propanoate site is built by Arg105, Tyr168, and His201. Tyr168 provides a ligand contact to N-formimidoyl-L-glutamate. Residue His265 coordinates Fe(3+). His265 serves as a coordination point for Zn(2+). Gln268 is a binding site for 4-imidazolone-5-propanoate. Fe(3+) is bound at residue Asp340. Position 340 (Asp340) interacts with Zn(2+). Asn342 and Gly344 together coordinate N-formimidoyl-L-glutamate. Thr345 provides a ligand contact to 4-imidazolone-5-propanoate.

Belongs to the metallo-dependent hydrolases superfamily. HutI family. It depends on Zn(2+) as a cofactor. Requires Fe(3+) as cofactor.

It localises to the cytoplasm. It carries out the reaction 4-imidazolone-5-propanoate + H2O = N-formimidoyl-L-glutamate. The protein operates within amino-acid degradation; L-histidine degradation into L-glutamate; N-formimidoyl-L-glutamate from L-histidine: step 3/3. Its function is as follows. Catalyzes the hydrolytic cleavage of the carbon-nitrogen bond in imidazolone-5-propanoate to yield N-formimidoyl-L-glutamate. It is the third step in the universal histidine degradation pathway. The polypeptide is Imidazolonepropionase (Psychrobacter cryohalolentis (strain ATCC BAA-1226 / DSM 17306 / VKM B-2378 / K5)).